Consider the following 215-residue polypeptide: UPF0126 membrane protein DR_2368 (215 aa).

Transmembrane regions (helical) follow at residues 15–35 (LHWLDLIGVLAFAMSGALLGV), 39–59 (FDLFGVLVLGAVTAVGGGAIR), 75–95 (TYLWTALLGALLAFAFGERLA), 101–121 (LSLFDSAGLALFATSGALGAI), 123–143 (IGLGPLGVVFAGMLSGVGGGI), and 162–182 (LYATAAAAGAGAVWLLAPHFT).

It belongs to the UPF0126 family.

The protein resides in the cell membrane. This chain is UPF0126 membrane protein DR_2368, found in Deinococcus radiodurans (strain ATCC 13939 / DSM 20539 / JCM 16871 / CCUG 27074 / LMG 4051 / NBRC 15346 / NCIMB 9279 / VKM B-1422 / R1).